Reading from the N-terminus, the 305-residue chain is MTDITRPENPESRCGFVAIVGRPNVGKSTLLNHILGQKLSITSRKPQTTRHQVLGIKTEGPVQAIYVDTPGMHEDEPRALNRYMNKAAASALIDVDVVVFVVDQLAWTSADEMVLEKLKRVKCPVILAVNKVDKLEKRELLLPHLEALSKKRDFAEIIPLSALKETNLEPLESAVGRFLPESVHFYPDDQITDRSERFMAAEMVREKITRQLGAELPYSVAVEIEEFKHQGNTLHVSALILVEREGQKKIIIGDKGERLRSIGQEARVDMERMFGSKVMLRLWVKVKRGWADSDRALKSLGMSDF.

The region spanning 13–181 (RCGFVAIVGR…ESAVGRFLPE (169 aa)) is the Era-type G domain. Positions 21–28 (GRPNVGKS) are G1. 21-28 (GRPNVGKS) serves as a coordination point for GTP. A G2 region spans residues 47-51 (QTTRH). The interval 68 to 71 (DTPG) is G3. Residues 68–72 (DTPGM) and 130–133 (NKVD) contribute to the GTP site. The interval 130–133 (NKVD) is G4. The G5 stretch occupies residues 160–162 (LSA). Positions 204–288 (VREKITRQLG…MLRLWVKVKR (85 aa)) constitute a KH type-2 domain.

Belongs to the TRAFAC class TrmE-Era-EngA-EngB-Septin-like GTPase superfamily. Era GTPase family. Monomer.

It localises to the cytoplasm. The protein localises to the cell inner membrane. In terms of biological role, an essential GTPase that binds both GDP and GTP, with rapid nucleotide exchange. Plays a role in 16S rRNA processing and 30S ribosomal subunit biogenesis and possibly also in cell cycle regulation and energy metabolism. This is GTPase Era from Marinobacter nauticus (strain ATCC 700491 / DSM 11845 / VT8) (Marinobacter aquaeolei).